Reading from the N-terminus, the 295-residue chain is NADPH-dependent reductive aminase (295 aa).

An N-terminal signal peptide occupies residues 1-18 (MSKHIGIFGLGAMGTALA). 6–20 (GIFGLGAMGTALAAK) is an NADP(+) binding site.

Belongs to the HIBADH-related family. As to quaternary structure, homodimer. The cofactor is NADPH.

In terms of biological role, NADPH-dependent reductive aminase that catalyzes the reductive coupling of a broad set of carbonyl compounds with a variety of primary and secondary amines. Possesses remarkably high activity for the reductive amination of ketones and amines, often with high stereoselectivity and in some cases with ketone:amine ratios as low as 1:1. The cofactor NADPH, the carbonyl compound and the amine are added to the enzyme in that sequence, followed by the release of product, NADP(+) being released at last. RedAm is also able to act in the reverse, oxidative direction and exhibits activity in the dehydrogenation of amines to yield imines. The highest activity is found for 1-methyl-tetrahydroquinoline and acyclic amines are also found to be transformed. The protein is NADPH-dependent reductive aminase of Aspergillus oryzae (strain ATCC 42149 / RIB 40) (Yellow koji mold).